A 303-amino-acid chain; its full sequence is Pycsar effector protein BcPycTIR (303 aa).

Residue 22 to 138 (KLVGGDKGLA…RRMAKELSKR (117 aa)) participates in a nucleoside 3',5'-cyclic phosphate binding. The tract at residues 154–273 (RVFVISSAEA…DMAGVTTIPY (120 aa)) is TIR-like.

As to quaternary structure, purified protein forms large 2-dimensional sheets when incubated with cUMP and shorter filaments in the presence of cCMP.

The protein resides in the cytoplasm. The enzyme catalyses NAD(+) + H2O = ADP-D-ribose + nicotinamide + H(+). With respect to regulation, activated by cyclic UMP (cUMP) and to a lesser extent by cCMP. Its function is as follows. Pycsar (pyrimidine cyclase system for antiphage resistance) provides immunity against bacteriophage. The pyrimidine cyclase (PycC) synthesizes cyclic nucleotides in response to infection; these serve as specific second messenger signals. The signals activate the adjacent effector, leading to bacterial cell death and abortive phage infection. A clade B Pycsar system. In terms of biological role, the effector protein of a two-gene Pycsar system. Upon activation by cyclic UMP (cUMP) degrades cellular NAD(+). Expression of this and adjacent uridylate cyclase BcPycC (AC A0A0J5ZXG5) probably confers resistance to bacteriophage. The genes are probably only expressed in response to bacteriophage infection. This protein probably only responds to cUMP (produced by its cognate NTP cyclase). The sequence is that of Pycsar effector protein BcPycTIR from Burkholderia cepacia (Pseudomonas cepacia).